A 188-amino-acid chain; its full sequence is dITP/XTP pyrophosphatase (188 aa).

7 to 12 (TGNIGK) provides a ligand contact to substrate. Mg(2+)-binding residues include glutamate 36 and aspartate 65. Aspartate 65 functions as the Proton acceptor in the catalytic mechanism. Residues serine 66, 141–144 (FGYD), lysine 164, and 169–170 (HR) each bind substrate.

Belongs to the HAM1 NTPase family. In terms of assembly, homodimer. It depends on Mg(2+) as a cofactor.

The enzyme catalyses XTP + H2O = XMP + diphosphate + H(+). It catalyses the reaction dITP + H2O = dIMP + diphosphate + H(+). The catalysed reaction is ITP + H2O = IMP + diphosphate + H(+). Functionally, pyrophosphatase that catalyzes the hydrolysis of nucleoside triphosphates to their monophosphate derivatives, with a high preference for the non-canonical purine nucleotides XTP (xanthosine triphosphate), dITP (deoxyinosine triphosphate) and ITP. Seems to function as a house-cleaning enzyme that removes non-canonical purine nucleotides from the nucleotide pool, thus preventing their incorporation into DNA/RNA and avoiding chromosomal lesions. The polypeptide is dITP/XTP pyrophosphatase (Methanopyrus kandleri (strain AV19 / DSM 6324 / JCM 9639 / NBRC 100938)).